The chain runs to 269 residues: Proline-rich protein 7 (269 aa).

Topologically, residues 1 to 9 are extracellular; the sequence is MVMSQGTYT. Residues 1 to 44 are required for interaction with NMDA receptors; it reads MVMSQGTYTFLTCFAGFWLIWGLIVLLCCFCSFLRRRLKRRQEE. The required for membrane localization stretch occupies residues 2–39; it reads VMSQGTYTFLTCFAGFWLIWGLIVLLCCFCSFLRRRLK. The chain crosses the membrane as a helical; Signal-anchor for type III membrane protein span at residues 10-30; it reads FLTCFAGFWLIWGLIVLLCCF. Topologically, residues 31–269 are cytoplasmic; that stretch reads CSFLRRRLKR…IPLFGRTTAV (239 aa). Disordered regions lie at residues 63-83 and 97-121; these read GSLAGSPPGLAPPPPPHRSRL and PLLHHGPAPPHAHPHPHHHALPHPP. Residue S64 is modified to Phosphoserine. Over residues 108 to 117 the composition is skewed to basic residues; that stretch reads AHPHPHHHAL. Residues 146 to 166 are required for internalization; the sequence is PCYEEAVLMAEPPPPYSEVLT. A required for apoptosis induction region spans residues 146 to 269; sequence PCYEEAVLMA…IPLFGRTTAV (124 aa). Residues 267–269 carry the PDZ-binding motif; the sequence is TAV.

As to quaternary structure, forms a complex with NMDA receptor zeta subunit GRIN1 and epsilon subunit GRIN2B. Interacts with GRIN2B. Interacts with GRIN1; the interaction is reduced upon NMDA receptor activity. Found in a postsynaptic membrane complex with DLG4 and GRIN1. Interacts with DLG4 (via PDZ3 domain and to lesser degree via PDZ2 domain). Interacts with JUN. Found in a complex with JUN and FBXW7. Interacts with JUN and FBXW7; the interaction inhibits ubiquitination-mediated JUN degradation promoting its phosphorylation and transcriptional activity. Interacts with SRC. Post-translationally, palmitoylated. In terms of processing, tyrosine phosphorylated, possibly by SRC. As to expression, highly expressed in brain, moderately expressed in lymph nodes and T cells and low expression in thymus and spleen. Expressed in single positive progenitor thymocytes, particularly in CD8 single positive thymocytes.

The protein resides in the cell membrane. It localises to the postsynaptic cell membrane. It is found in the postsynaptic density membrane. Its subcellular location is the cytoplasm. The protein localises to the perinuclear region. The protein resides in the synapse. It localises to the cell projection. It is found in the dendrite. Its subcellular location is the nucleus. Functionally, acts as a synapse-to-nucleus messenger to promote NMDA receptor-mediated excitotoxicity in neurons in a JUN-dependent manner. Inhibits ubiquitination-mediated degradation and promotes phosphorylation and transcriptional activity of transcription factor JUN. Might play a redundant role in the regulation of T cell receptor signaling. Might promote apoptosis in T cells. This is Proline-rich protein 7 (Prr7) from Mus musculus (Mouse).